The sequence spans 261 residues: Ribosomal RNA small subunit methyltransferase J (261 aa).

S-adenosyl-L-methionine-binding positions include 129–130 (ER) and Asp-182.

This sequence belongs to the methyltransferase superfamily. RsmJ family.

The protein resides in the cytoplasm. It carries out the reaction guanosine(1516) in 16S rRNA + S-adenosyl-L-methionine = N(2)-methylguanosine(1516) in 16S rRNA + S-adenosyl-L-homocysteine + H(+). Its function is as follows. Specifically methylates the guanosine in position 1516 of 16S rRNA. The polypeptide is Ribosomal RNA small subunit methyltransferase J (Desulfotalea psychrophila (strain LSv54 / DSM 12343)).